The primary structure comprises 515 residues: Alpha,alpha-trehalose-phosphate synthase [UDP-forming] 1 (515 aa).

Y97 and D151 together coordinate D-glucose 6-phosphate. The UDP site is built by R287 and K292. 2 residues coordinate UDP-alpha-D-glucose: R287 and K292. A D-glucose 6-phosphate-binding site is contributed by R325. UDP-binding positions include V364 and 390–394 (LVAYE). 386–394 (DGMNLVAYE) is a UDP-alpha-D-glucose binding site. The disordered stretch occupies residues 483–515 (GKFQSRKAKLPESADAEKPMNGSGESEESQTTQ). The segment covering 491–500 (KLPESADAEK) has biased composition (basic and acidic residues).

It belongs to the glycosyltransferase 20 family.

It catalyses the reaction D-glucose 6-phosphate + UDP-alpha-D-glucose = alpha,alpha-trehalose 6-phosphate + UDP + H(+). The protein operates within carbohydrate biosynthesis. Synthase catalytic subunit of the trehalose synthase complex that catalyzes the production of trehalose from glucose-6-phosphate and UDP-alpha-D-glucose in a two step process. The disaccharide trehalose serves as a storage carbohydrate that is mobilized during conidial germination. Regulates the level of trehalose as a protectant for cell integrity during thermal and oxidative stress. This chain is Alpha,alpha-trehalose-phosphate synthase [UDP-forming] 1, found in Aspergillus fumigatus (strain ATCC MYA-4609 / CBS 101355 / FGSC A1100 / Af293) (Neosartorya fumigata).